Here is a 261-residue protein sequence, read N- to C-terminus: Sugar fermentation stimulation protein homolog (261 aa).

Residues 1 to 23 (MTDSAKPQNPDPGHESRRVAPLA) are disordered.

The protein belongs to the SfsA family.

This Syntrophobacter fumaroxidans (strain DSM 10017 / MPOB) protein is Sugar fermentation stimulation protein homolog.